Here is a 33-residue protein sequence, read N- to C-terminus: uncharacterized protein (33 aa).

This is an uncharacterized protein from Staphylococcus aureus (strain N315).